A 109-amino-acid polypeptide reads, in one-letter code: Putative pterin-4-alpha-carbinolamine dehydratase (109 aa).

The protein belongs to the pterin-4-alpha-carbinolamine dehydratase family.

The catalysed reaction is (4aS,6R)-4a-hydroxy-L-erythro-5,6,7,8-tetrahydrobiopterin = (6R)-L-erythro-6,7-dihydrobiopterin + H2O. The polypeptide is Putative pterin-4-alpha-carbinolamine dehydratase (Vibrio cholerae serotype O1 (strain ATCC 39315 / El Tor Inaba N16961)).